The chain runs to 253 residues: Pro-opiomelanocortin A (253 aa).

Residues methionine 1 to glycine 21 form the signal peptide. Residue glutamine 22 is modified to Pyrrolidone carboxylic acid. Intrachain disulfides connect cysteine 23-cysteine 45 and cysteine 29-cysteine 41. Serine 104 carries the N-acetylserine; in Corticotropin modification. Valine 116 carries the valine amide modification. Residues glutamine 228–glycine 253 are disordered. Residue glutamine 252 is modified to Glutamine amide; partial.

The protein belongs to the POMC family. Post-translationally, specific enzymatic cleavages at paired basic residues yield the different active peptides. In terms of processing, acetylation of beta-endorphin occurs in a tissue-specific manner. In terms of tissue distribution, C-terminal peptide 1 and C-terminal peptide 2 are detected in the anterior part of the nucleus lateralis tuberis of hypothalamus, in dorsal hypothalamus, thalamus, telencephalon, optic tectum and medulla oblongata (at protein level). Expressed in pituitary and hypothalamus of adult diploid animals, and hypothalamus of triploid and ovulated female trout.

The protein localises to the secreted. Functionally, stimulates the adrenal glands to release cortisol. In terms of biological role, melanocyte-stimulating hormone alpha: Anorexigenic peptide. Increases the pigmentation of skin by increasing melanin production in melanocytes. Melanocyte-stimulating hormone beta: Increases the pigmentation of skin by increasing melanin production in melanocytes. Its function is as follows. Beta-endorphin: Endogenous orexigenic opiate. Functionally, endogenous opiate. The polypeptide is Pro-opiomelanocortin A (pomca) (Oncorhynchus mykiss (Rainbow trout)).